Here is a 1119-residue protein sequence, read N- to C-terminus: Agglutinin-like protein 3 (1119 aa).

The first 17 residues, 1–17, serve as a signal peptide directing secretion; sequence MLQQYTLLLIYLSVATA. Intrachain disulfides connect Cys73–Cys150, Cys96–Cys112, Cys205–Cys298, and Cys227–Cys256. 3 ALS repeats span residues 365–396, 401–432, and 438–469; these read TTIT…VDIP, TTVT…VQVP, and VTTT…IREP. Asn471 carries N-linked (GlcNAc...) asparagine glycosylation. 2 ALS repeats span residues 474–505 and 510–541; these read VTTT…IKEP. Asn543 is a glycosylation site (N-linked (GlcNAc...) asparagine). The ALS 6 repeat unit spans residues 546 to 577; it reads VTTTEYWSQSYTTTTTVTAPPGGTDTVLVREP. N-linked (GlcNAc...) asparagine glycosylation occurs at Asn579. ALS repeat units lie at residues 582–613 and 618–649; these read VTTT…IREP. Asn651 carries an N-linked (GlcNAc...) asparagine glycan. One copy of the ALS 9 repeat lies at 654 to 685; the sequence is VTTTEYWSQSYATTTTITAPPGETDTVLIREP. Asn687 carries an N-linked (GlcNAc...) asparagine glycan. The stretch at 690–721 is one ALS 10 repeat; that stretch reads VTTTEYWSQSFATTTTVTAPPGGTDTVIIREP. An N-linked (GlcNAc...) asparagine glycan is attached at Asn723. An ALS 11 repeat occupies 726 to 757; it reads VTTTEYWSQSYATTTTITAPPGETDTVLIREP. Asn759 is a glycosylation site (N-linked (GlcNAc...) asparagine). 2 ALS repeats span residues 762–793 and 798–827; these read VTTT…IREP and VTTT…VIIY. A glycan (N-linked (GlcNAc...) asparagine) is linked at Asn845. A disordered region spans residues 892-1077; sequence MVTNTVDSTT…QYNSDTQQTT (186 aa). The span at 894–929 shows a compositional bias: low complexity; it reads TNTVDSTTTESTSQSPSGIFSESGVSVETESSTVTT. Composition is skewed to polar residues over residues 930 to 941 and 947 to 965; these read AQTNPSVPTTES and TKGN…NVKS. The segment covering 974–983 has biased composition (low complexity); sequence TTSTAASTST. N-linked (GlcNAc...) asparagine glycosylation occurs at Asn987. Composition is skewed to low complexity over residues 998 to 1022 and 1035 to 1048; these read ASSP…STSV and APSA…TTTA. 2 N-linked (GlcNAc...) asparagine glycosylation sites follow: Asn1050 and Asn1061. Residues 1057 to 1077 show a composition bias toward low complexity; the sequence is TTSTNQSQSQSQYNSDTQQTT. The GPI-anchor amidated serine moiety is linked to residue Ser1098. A propeptide spans 1099-1119 (removed in mature form); it reads GSVIQHSTWLCGLITLLSLFI.

Belongs to the ALS family. The GPI-anchor is attached to the protein in the endoplasmic reticulum and serves to target the protein to the cell surface. There, the glucosamine-inositol phospholipid moiety is cleaved off and the GPI-modified mannoprotein is covalently attached via its lipidless GPI glycan remnant to the 1,6-beta-glucan of the outer cell wall layer.

Its subcellular location is the cell membrane. The protein localises to the secreted. It is found in the cell wall. Functionally, cell surface adhesion protein which mediates both yeast-to-host tissue adherence and yeast aggregation. Plays an important role in the biofilm formation and pathogenesis of C.albicans infections. Necessary for C.albicans to bind to N-cadherin on endothelial cells and E-cadherin on oral epithelial cells and subsequent endocytosis by these cells. During disseminated infection, mediates initial trafficking to the brain and renal cortex and contributes to fungal persistence in the kidneys. In Candida albicans (Yeast), this protein is Agglutinin-like protein 3 (ALS3).